Consider the following 711-residue polypeptide: Probable cadmium-transporting ATPase (711 aa).

In terms of domain architecture, HMA spans 3–66 (EKTVYRVDGL…AGAFEHLKII (64 aa)). Cd(2+) contacts are provided by cysteine 14 and cysteine 17. Helical transmembrane passes span 89–109 (WRLL…IMNG), 111–131 (DFYL…YSLF), 151–171 (IAII…VVIL), 317–337 (TPAI…LFGG), and 347–367 (LSVL…VAIV). The active-site 4-aspartylphosphate intermediate is aspartate 398. A helical membrane pass occupies residues 669 to 689 (VIKLIALLLVIPGWLTLWIAI).

Belongs to the cation transport ATPase (P-type) (TC 3.A.3) family. Type IB subfamily.

It localises to the cell membrane. The enzyme catalyses Cd(2+)(in) + ATP + H2O = Cd(2+)(out) + ADP + phosphate + H(+). Couples the hydrolysis of ATP with the export of cadmium. The polypeptide is Probable cadmium-transporting ATPase (cadA) (Listeria monocytogenes).